Reading from the N-terminus, the 103-residue chain is Acylphosphatase-2 (103 aa).

The region spanning Ser13–Tyr103 is the Acylphosphatase-like domain. Catalysis depends on residues Arg28 and Asn46.

Belongs to the acylphosphatase family.

The enzyme catalyses an acyl phosphate + H2O = a carboxylate + phosphate + H(+). The protein is Acylphosphatase-2 (acyp2) of Xenopus tropicalis (Western clawed frog).